Reading from the N-terminus, the 602-residue chain is Elongation factor 4 (602 aa).

Positions 7–189 (KYIRNFSIVA…AIVNKVPAPD (183 aa)) constitute a tr-type G domain. GTP is bound by residues 19 to 24 (DHGKST) and 136 to 139 (NKID).

This sequence belongs to the TRAFAC class translation factor GTPase superfamily. Classic translation factor GTPase family. LepA subfamily.

Its subcellular location is the cell membrane. The enzyme catalyses GTP + H2O = GDP + phosphate + H(+). In terms of biological role, required for accurate and efficient protein synthesis under certain stress conditions. May act as a fidelity factor of the translation reaction, by catalyzing a one-codon backward translocation of tRNAs on improperly translocated ribosomes. Back-translocation proceeds from a post-translocation (POST) complex to a pre-translocation (PRE) complex, thus giving elongation factor G a second chance to translocate the tRNAs correctly. Binds to ribosomes in a GTP-dependent manner. This chain is Elongation factor 4, found in Clostridium botulinum (strain 657 / Type Ba4).